Here is a 237-residue protein sequence, read N- to C-terminus: Phosphoribosylaminoimidazole-succinocarboxamide synthase (237 aa).

Belongs to the SAICAR synthetase family.

The catalysed reaction is 5-amino-1-(5-phospho-D-ribosyl)imidazole-4-carboxylate + L-aspartate + ATP = (2S)-2-[5-amino-1-(5-phospho-beta-D-ribosyl)imidazole-4-carboxamido]succinate + ADP + phosphate + 2 H(+). It participates in purine metabolism; IMP biosynthesis via de novo pathway; 5-amino-1-(5-phospho-D-ribosyl)imidazole-4-carboxamide from 5-amino-1-(5-phospho-D-ribosyl)imidazole-4-carboxylate: step 1/2. The chain is Phosphoribosylaminoimidazole-succinocarboxamide synthase from Klebsiella pneumoniae (strain 342).